The sequence spans 176 residues: Cytochrome c oxidase subunit 5b-1, mitochondrial (176 aa).

The transit peptide at 1–55 (MWRRIVSSQLKTLAADVVAASPRRSIAATTRPVGFYLAANRSAISASSFVIPRRF) directs the protein to the mitochondrion. Residues Cys-122, Cys-146, and Cys-149 each coordinate Zn(2+). Positions 157-176 (VVGPGGPPDGHGDEDDEHHH) are disordered.

Belongs to the cytochrome c oxidase subunit 5B (TC 3.D.4.11) family.

It is found in the mitochondrion inner membrane. Its function is as follows. This protein is one of the nuclear-coded polypeptide chains of cytochrome c oxidase, the terminal oxidase in mitochondrial electron transport. The chain is Cytochrome c oxidase subunit 5b-1, mitochondrial (COX5B-1) from Arabidopsis thaliana (Mouse-ear cress).